Consider the following 44-residue polypeptide: pyr operon leader peptide (44 aa).

The sequence is that of pyr operon leader peptide (pyrL) from Shigella flexneri.